An 804-amino-acid polypeptide reads, in one-letter code: MMEGLKKRTRKAFGIRKKEKDTDSTGSPDRDGIKKSNGAPNGFYAEIDWERYNSPELDEEGYSIRPEEPGSTKGKHFYSSSESEEEEESHKKFNIKIKPLQSKDILKNAATVDELKASIGNIALSPSPVRKSPRRSPGAIKWNLSSEEVARPRRSTPTPELISKKPPDDTTALAPLFGPPLESAFDEQKTEVLLDQPEIWGSGQPINPSMESPKLTRPFPTGTPPPLPPKNVPATPPRTGSPLTIGPGNDQSATEVKIEKLPSINDLDSIFGPVLSPKSVAVNAEEKWVHFSDTSPEHVTPELTPREKVVSPPATPDNPADSPAPGPLGPPGPTGPPGPPGPPRNVPSPLNLEEVQKKVAEQTFIKDDYLETISSPKDFGLGQRATPPPPPPPTYRTVVSSPGPGSGPGTGTTSGASSPARPATPLLPCSSTTPPPPPPRPPSRPKLPPGKPGVGDVSRPFSPPIHSSSPPPIAPLARAESTSSISSTNSLSAATTPTVENEQPSLVWFDRGKFYLTFEGSSRGPSPLTMGAQDTLPVAAAFTETVNAYFKGADPSKCIVKITGEMVLSFPAGITRHFANNPSPAALTFRVINFSRLEHVLPNPQLLCCDNTQNDANTKEFWVNMPNLMTHLKKVSEQKPQATYYNVDMLKYQVSAQGIQSTPLNLAVNWRCEPSSTDLRIDYKYNTDAMTTAVALNNVQFLVPIDGGVTKLQAVLPPAVRNAEQQRILWKIPDISQKSENGGVGSLLARFQLSEGPSKPSPLVVQFTSEGSTLSGCDIELVGAGYRFSLIKKRFAAGKYLADN.

3 disordered regions span residues 1-90, 124-181, and 199-254; these read MMEG…EESH, LSPS…GPPL, and IWGS…QSAT. A compositionally biased stretch (basic and acidic residues) spans 16 to 34; that stretch reads RKKEKDTDSTGSPDRDGIK. Phosphoserine is present on residues serine 54, serine 80, serine 81, serine 83, serine 125, serine 127, serine 132, and serine 145. 2 positions are modified to phosphothreonine: threonine 156 and threonine 158. Serine 212 bears the Phosphoserine mark. Positions 221–236 are enriched in pro residues; it reads TGTPPPLPPKNVPATP. 2 positions are modified to phosphothreonine: threonine 223 and threonine 235. Phosphoserine is present on residues serine 241, serine 263, serine 276, serine 292, and serine 295. Residues 289-309 show a composition bias toward basic and acidic residues; the sequence is VHFSDTSPEHVTPELTPREKV. Residues 289-500 are disordered; sequence VHFSDTSPEH…LSAATTPTVE (212 aa). Phosphothreonine occurs at positions 300 and 304. Residues 322–346 show a composition bias toward pro residues; sequence SPAPGPLGPPGPTGPPGPPGPPRNV. Serine 348 is subject to Phosphoserine. A compositionally biased stretch (basic and acidic residues) spans 354–369; the sequence is EVQKKVAEQTFIKDDY. Serine 375 carries the post-translational modification Phosphoserine. Threonine 386 is subject to Phosphothreonine. Positions 413-432 are enriched in low complexity; it reads TSGASSPARPATPLLPCSST. The span at 433–451 shows a compositional bias: pro residues; sequence TPPPPPPRPPSRPKLPPGK. 2 stretches are compositionally biased toward low complexity: residues 458–468 and 475–498; these read SRPFSPPIHSS and PLAR…TTPT. Serine 462 is modified (phosphoserine). The region spanning 535–803 is the MHD domain; sequence TLPVAAAFTE…RFAAGKYLAD (269 aa). 4 interaction with DPF motifs-containing proteins regions span residues 537–543, 569–571, 643–646, and 789–794; these read PVAAAFT, SFP, TYYN, and SLIKKR. Residues 625 to 804 form a necessary and sufficient to mediate interaction with CANX region; that stretch reads MPNLMTHLKK…FAAGKYLADN (180 aa).

As to quaternary structure, interacts with proteins essential or regulating the formation of functional clathrin-coated pits. Interacts with CANX. Interacts with AP2A1. Interacts with EPS15. Interacts with SH3GL3. Interacts with AMPH. Interacts with ITSN1 (via SH3 domains). Interacts with and REPS1.

It localises to the membrane. Its subcellular location is the clathrin-coated pit. In terms of biological role, may function in clathrin-mediated endocytosis. Has both a membrane binding/tubulating activity and the ability to recruit proteins essential to the formation of functional clathrin-coated pits. Has a preference for membranes enriched in phosphatidylserine and phosphoinositides and is required for the endocytosis of the transferrin receptor. May also bind tubulin. May play a role in the regulation of energy homeostasis. The polypeptide is SH3-containing GRB2-like protein 3-interacting protein 1 (SGIP1) (Pongo abelii (Sumatran orangutan)).